A 164-amino-acid polypeptide reads, in one-letter code: Phosphopantetheine adenylyltransferase (164 aa).

Ser-9 is a binding site for substrate. ATP-binding positions include 9–10 and His-17; that span reads SF. Residues Lys-41, Val-78, and Arg-92 each contribute to the substrate site. ATP contacts are provided by residues 93-95, Glu-103, and 128-134; these read GLR and SRPITAT.

The protein belongs to the bacterial CoaD family. Homohexamer. The cofactor is Mg(2+).

It localises to the cytoplasm. It carries out the reaction (R)-4'-phosphopantetheine + ATP + H(+) = 3'-dephospho-CoA + diphosphate. Its pathway is cofactor biosynthesis; coenzyme A biosynthesis; CoA from (R)-pantothenate: step 4/5. Its function is as follows. Reversibly transfers an adenylyl group from ATP to 4'-phosphopantetheine, yielding dephospho-CoA (dPCoA) and pyrophosphate. This Sinorhizobium fredii (strain NBRC 101917 / NGR234) protein is Phosphopantetheine adenylyltransferase.